A 149-amino-acid chain; its full sequence is Ribonuclease pancreatic (149 aa).

The first 25 residues, 1–25 (MGLEKSLILLPLLVLVLAWVQPSLG), serve as a signal peptide directing secretion. Lys32 and Arg35 together coordinate substrate. His37 (proton acceptor) is an active-site residue. 4 cysteine pairs are disulfide-bonded: Cys51-Cys109, Cys65-Cys120, Cys83-Cys135, and Cys90-Cys97. 66–70 (KRVNT) contacts substrate. N-linked (GlcNAc...) asparagine glycosylation occurs at Asn87. Substrate is bound by residues Lys91 and Arg110. The active-site Proton donor is the His144.

This sequence belongs to the pancreatic ribonuclease family. As to quaternary structure, monomer. Interacts with and forms tight 1:1 complexes with RNH1. Dimerization of two such complexes may occur. Interaction with RNH1 inhibits this protein. Pancreas.

The protein resides in the secreted. The catalysed reaction is an [RNA] containing cytidine + H2O = an [RNA]-3'-cytidine-3'-phosphate + a 5'-hydroxy-ribonucleotide-3'-[RNA].. The enzyme catalyses an [RNA] containing uridine + H2O = an [RNA]-3'-uridine-3'-phosphate + a 5'-hydroxy-ribonucleotide-3'-[RNA].. Endonuclease that catalyzes the cleavage of RNA on the 3' side of pyrimidine nucleotides. Acts on single-stranded and double-stranded RNA. This is Ribonuclease pancreatic (RNASE1) from Acomys cahirinus (Cairo spiny mouse).